The sequence spans 91 residues: Auxin-responsive protein SAUR20 (91 aa).

This sequence belongs to the ARG7 family.

Its subcellular location is the cell membrane. In terms of biological role, functions as a positive effector of cell expansion through modulation of auxin transport. This is Auxin-responsive protein SAUR20 from Arabidopsis thaliana (Mouse-ear cress).